The primary structure comprises 374 residues: N5-carboxyaminoimidazole ribonucleotide synthase (374 aa).

ATP-binding positions include Arg108, Lys148, 153-159 (GYDGKGQ), 183-186 (EKYL), Glu191, His214, and 266-267 (NE). The ATP-grasp domain maps to 112 to 296 (KETLKSAGTK…QFDTHILAVT (185 aa)).

Belongs to the PurK/PurT family. As to quaternary structure, homodimer.

The enzyme catalyses 5-amino-1-(5-phospho-beta-D-ribosyl)imidazole + hydrogencarbonate + ATP = 5-carboxyamino-1-(5-phospho-D-ribosyl)imidazole + ADP + phosphate + 2 H(+). Its pathway is purine metabolism; IMP biosynthesis via de novo pathway; 5-amino-1-(5-phospho-D-ribosyl)imidazole-4-carboxylate from 5-amino-1-(5-phospho-D-ribosyl)imidazole (N5-CAIR route): step 1/2. Its function is as follows. Catalyzes the ATP-dependent conversion of 5-aminoimidazole ribonucleotide (AIR) and HCO(3)(-) to N5-carboxyaminoimidazole ribonucleotide (N5-CAIR). The protein is N5-carboxyaminoimidazole ribonucleotide synthase of Staphylococcus aureus (strain MRSA252).